Here is a 1232-residue protein sequence, read N- to C-terminus: MVHPVQVGKRTRMSFSRLKEVGQMPNLIEVQLDSYDWFLKEGLQEVFDDINPIQDYTGNLNLEFVGYKLDLDSIKYSVEECKERDSTYAAPLKVKVRLLNKETGEIKEQEVFMGDFPLMTEQGTFIINGAERVIVSQLVRSPGVYYDMTVDKTGSKLFSATVIPNRGAWLEYETDSNNIIYVRIDKTRKLPITILARALGYGTDAEIIEFFGEDERLKATIEKDNTKTREEALLEIYKRLRPGEPPTVDSAESLIESLFFDAKRYDLSRVGRYKFNKKLAIHLRITNQIADQDIVNPQTGEILVQKGEKIDKDKAIEIQNCGINEVYIKIDDKSFKVIGNHFVDIHSLVPFDISDLNIKEYVFYPVLKEILDNYADEESIKEEIRKNIYRLIPKHIIREDIYATINYELALSYDIGYKDDIDHLGNRRLRSVGELLQNQFRIGLSRMERVVKERMTIQDQEVITPQALINIRPVAASIKEFFGSSQLSQFMDQTNPLSELTHKRRLSALGPGGLSRERAGFEVRDVHHSHYGRMCPIETPEGPNIGLINSLATFAKVNEYGFIETPYRRIDPKNKRATNDIVYMTADEEDLYVIARSDEPIDENGYFIDDKVTVRAKEEVLVVPVSEVEYMDISPRQLVSVATAMIPFLENDDASRALMGSNMQRQAVPLLKPQAPIVGTGIEYKAATDSGVLPKAKNAGTVVYVSADEIRVRRDSDGGIDKYKLLKFKRSNQGTCINQRPIVSKGEVVAKETLLADGPSTDLGEIALGKNILMGFITWEGYNYEDAMLISEQLVKEDVFTSIHIEEYEAEARDTKLGPEEITRDIPNVGEEALKDIDERGIIRIGAEVRSGDILVGKVTPKGETELTAEERLLRAIFGEKAREVRDTSLRVPHGEAGIIVDVKIFTRENGDELPPGVNKLVRCYIAQKRKISVGDKMAGRHGNKGVISRVLPEEDMPFLPDGRPLQICLNPLGVPSRMNIGQVLEVHLGLAASKLGWHIATPVFDGAIESDIVDCLRKAGYSEDGKTVLYDGRTGEPFDNRVTVGYMYILKLAHLVDDKIHARSTGPYSLVTQQPLGGKAQFGGQRFGEMEVWALEAYGAAHTLQEILTVKSDDVVGRVKTYEAIVKGENIPEPGVPESFKVLIKELQALCLDVKVLNDDNQEIKLKESVDEDADELEVNIEGTENQPEEKEEKEKEDSDEYDDLREEDVEPDLEELSLDDLDLDDFGDEH.

Residues 1170-1232 form a disordered region; that stretch reads SVDEDADELE…LDLDDFGDEH (63 aa). Residues 1171–1180 are compositionally biased toward acidic residues; that stretch reads VDEDADELEV. A compositionally biased stretch (basic and acidic residues) spans 1189-1198; it reads PEEKEEKEKE. The segment covering 1199-1232 has biased composition (acidic residues); that stretch reads DSDEYDDLREEDVEPDLEELSLDDLDLDDFGDEH.

Belongs to the RNA polymerase beta chain family. The RNAP catalytic core consists of 2 alpha, 1 beta, 1 beta' and 1 omega subunit. When a sigma factor is associated with the core the holoenzyme is formed, which can initiate transcription.

It carries out the reaction RNA(n) + a ribonucleoside 5'-triphosphate = RNA(n+1) + diphosphate. Functionally, DNA-dependent RNA polymerase catalyzes the transcription of DNA into RNA using the four ribonucleoside triphosphates as substrates. In Clostridium botulinum (strain Hall / ATCC 3502 / NCTC 13319 / Type A), this protein is DNA-directed RNA polymerase subunit beta.